The following is a 94-amino-acid chain: Co-chaperonin GroES (94 aa).

Belongs to the GroES chaperonin family. In terms of assembly, heptamer of 7 subunits arranged in a ring. Interacts with the chaperonin GroEL.

The protein resides in the cytoplasm. Together with the chaperonin GroEL, plays an essential role in assisting protein folding. The GroEL-GroES system forms a nano-cage that allows encapsulation of the non-native substrate proteins and provides a physical environment optimized to promote and accelerate protein folding. GroES binds to the apical surface of the GroEL ring, thereby capping the opening of the GroEL channel. The polypeptide is Co-chaperonin GroES (Caldanaerobacter subterraneus subsp. tengcongensis (strain DSM 15242 / JCM 11007 / NBRC 100824 / MB4) (Thermoanaerobacter tengcongensis)).